The sequence spans 247 residues: NAD-dependent protein deacetylase 2 (247 aa).

The Deacetylase sirtuin-type domain maps to 1 to 247 (MDQIRQLAQW…ASVRKQIQAE (247 aa)). 8 residues coordinate NAD(+): Ala-23, Thr-27, Phe-34, Arg-35, Gln-103, Ile-105, Asp-106, and His-121. Residue Phe-34 coordinates nicotinamide. 2 residues coordinate nicotinamide: Ile-105 and Asp-106. The active-site Proton acceptor is His-121. Zn(2+)-binding residues include Cys-129, Cys-132, Cys-149, and Cys-152. NAD(+) contacts are provided by Thr-188, Ser-189, Asn-215, and Ile-233.

The protein belongs to the sirtuin family. Class U subfamily. Zn(2+) is required as a cofactor.

The protein localises to the cytoplasm. The enzyme catalyses N(6)-acetyl-L-lysyl-[protein] + NAD(+) + H2O = 2''-O-acetyl-ADP-D-ribose + nicotinamide + L-lysyl-[protein]. NAD-dependent protein deacetylase which modulates the activities of several enzymes which are inactive in their acetylated form. In Geobacillus kaustophilus (strain HTA426), this protein is NAD-dependent protein deacetylase 2.